Reading from the N-terminus, the 174-residue chain is Co-chaperone protein HscB (174 aa).

Residues 2 to 74 (NYFTLFDLPR…LNRAIYFLCL (73 aa)) enclose the J domain.

The protein belongs to the HscB family. As to quaternary structure, interacts with HscA and stimulates its ATPase activity. Interacts with IscU.

Co-chaperone involved in the maturation of iron-sulfur cluster-containing proteins. Seems to help targeting proteins to be folded toward HscA. The sequence is that of Co-chaperone protein HscB from Buchnera aphidicola subsp. Acyrthosiphon pisum (strain Tuc7).